We begin with the raw amino-acid sequence, 204 residues long: 34 kDa membrane antigen (204 aa).

The N-terminal stretch at 1 to 19 is a signal peptide; that stretch reads MKRVSLLGSAAIFALVFSA. Residue C20 is the site of N-palmitoyl cysteine attachment. C20 is lipidated: S-diacylglycerol cysteine.

Belongs to the UPF0423 family.

It is found in the cell membrane. This antigen is a pathogen-specific membrane immunogen. The sequence is that of 34 kDa membrane antigen (tpd) from Treponema pallidum (strain Nichols).